Here is a 282-residue protein sequence, read N- to C-terminus: Elongation factor Ts (282 aa).

Positions 79–82 are involved in Mg(2+) ion dislocation from EF-Tu; sequence TDFV.

The protein belongs to the EF-Ts family.

It is found in the cytoplasm. Associates with the EF-Tu.GDP complex and induces the exchange of GDP to GTP. It remains bound to the aminoacyl-tRNA.EF-Tu.GTP complex up to the GTP hydrolysis stage on the ribosome. This Colwellia psychrerythraea (strain 34H / ATCC BAA-681) (Vibrio psychroerythus) protein is Elongation factor Ts.